A 244-amino-acid chain; its full sequence is uncharacterized protein (244 aa).

One can recognise a GP-PDE domain in the interval 5-244 (QLLLAHRGYS…ANKKFEIKIN (240 aa)).

It to glycerophosphoryl diester phosphodiesterases (EC 3.1.4.46). To M.genitalium MG385.

This is an uncharacterized protein from Mycoplasma genitalium (strain ATCC 33530 / DSM 19775 / NCTC 10195 / G37) (Mycoplasmoides genitalium).